Here is a 335-residue protein sequence, read N- to C-terminus: 3-dehydroquinate synthase (335 aa).

NAD(+) is bound by residues 56-61 (DGEKYK), 90-94 (GVITD), 114-115 (TT), lysine 127, lysine 135, and 153-156 (FLKT). The Zn(2+) site is built by glutamate 168, histidine 227, and histidine 243.

This sequence belongs to the sugar phosphate cyclases superfamily. Dehydroquinate synthase family. Requires NAD(+) as cofactor. Co(2+) is required as a cofactor. The cofactor is Zn(2+).

Its subcellular location is the cytoplasm. The catalysed reaction is 7-phospho-2-dehydro-3-deoxy-D-arabino-heptonate = 3-dehydroquinate + phosphate. It functions in the pathway metabolic intermediate biosynthesis; chorismate biosynthesis; chorismate from D-erythrose 4-phosphate and phosphoenolpyruvate: step 2/7. Functionally, catalyzes the conversion of 3-deoxy-D-arabino-heptulosonate 7-phosphate (DAHP) to dehydroquinate (DHQ). The polypeptide is 3-dehydroquinate synthase (Pyrococcus furiosus (strain ATCC 43587 / DSM 3638 / JCM 8422 / Vc1)).